Here is a 726-residue protein sequence, read N- to C-terminus: Uracil catabolism protein 2 (726 aa).

The segment at residues 24-53 is a DNA-binding region (zn(2)-C6 fungal-type); sequence CGVCRKFKTRCDFEPLVGKCHRCNVLRLEC. 2 disordered regions span residues 152–183 and 629–681; these read AGMG…FVNG and SGRL…SGAD. The segment covering 161-170 has biased composition (acidic residues); the sequence is YDDDDDGDDD. Over residues 640–679 the composition is skewed to polar residues; it reads RGSPSMTPGFQQSVQSSSALQGSKAGSPQSARSVNSQGSG.

It belongs to the URC2 family.

The protein resides in the nucleus. Probable transcriptional activator involved in uracil catabolism. In Lachancea kluyveri (Yeast), this protein is Uracil catabolism protein 2 (URC2).